A 111-amino-acid chain; its full sequence is TPR repeat-containing protein associated with Hsp90 (111 aa).

N-acetylserine is present on S2. TPR repeat units lie at residues 4–37 (FEKQKEQGNSLFKQGLYREAVHCYDQLITAQPQN) and 39–71 (VGYSNKAMALIKLGEYTQAIQMCQQGLRYTSTA).

Component of the R2TP complex composed at least of RVB1, RVB2, TAH1 and PIH1. Also interacts with HSP90.

Its subcellular location is the cytoplasm. The protein resides in the nucleus. This chain is TPR repeat-containing protein associated with Hsp90 (TAH1), found in Saccharomyces cerevisiae (strain ATCC 204508 / S288c) (Baker's yeast).